The sequence spans 122 residues: Large ribosomal subunit protein uL14 (122 aa).

It belongs to the universal ribosomal protein uL14 family. As to quaternary structure, part of the 50S ribosomal subunit. Forms a cluster with proteins L3 and L19. In the 70S ribosome, L14 and L19 interact and together make contacts with the 16S rRNA in bridges B5 and B8.

Its function is as follows. Binds to 23S rRNA. Forms part of two intersubunit bridges in the 70S ribosome. The protein is Large ribosomal subunit protein uL14 of Oleidesulfovibrio alaskensis (strain ATCC BAA-1058 / DSM 17464 / G20) (Desulfovibrio alaskensis).